Reading from the N-terminus, the 349-residue chain is Divinyl chlorophyll a/b light-harvesting protein PcbE (349 aa).

6 consecutive transmembrane segments (helical) span residues 27–47 (FIAAHIAHTGLIAFAAGGSTL), 65–85 (IFLAHLASIGIGFDEAGAWTG), 88–108 (VASIAIVHLVLSMVYGAGGLL), 201–221 (VLGGHAFLAFLEITGGAFHIA), 241–261 (AILSFSCAGLGWMAVVAAFWC), and 308–328 (LANVHYYFGFFFLQGHLWHAL).

This sequence belongs to the PsbB/PsbC family. IsiA/Pcb subfamily. The antenna complex consists of divinyl chlorophylls (a and b) and divinyl chlorophyll a/b binding proteins and binds more divinyl chlorophyll b than does the antenna complex from high-light-adapted Prochlorococcus. Divinyl chlorophyll a serves as cofactor. Divinyl chlorophyll b is required as a cofactor.

It is found in the cellular thylakoid membrane. In terms of biological role, the antenna complex functions as a light receptor, it captures and delivers excitation energy to photosystems II and I. The Prochlorales pcb genes are not related to higher plant LHCs. This is Divinyl chlorophyll a/b light-harvesting protein PcbE (pcbE) from Prochlorococcus marinus (strain NATL2A).